A 332-amino-acid chain; its full sequence is Phospho-N-acetylmuramoyl-pentapeptide-transferase (332 aa).

10 helical membrane passes run 3–23, 52–72, 74–94, 115–135, 140–160, 172–192, 197–217, 223–243, 248–268, and 311–331; these read FALM…PRFI, MGGT…ATAF, LLTG…VVGF, LALQ…GAGG, VFGH…FWLV, IDGL…VIAF, FDIL…FVYN, IFMG…ISIA, WTLL…MLQV, and VDFF…AILY.

The protein belongs to the glycosyltransferase 4 family. MraY subfamily. It depends on Mg(2+) as a cofactor.

Its subcellular location is the cell membrane. The catalysed reaction is UDP-N-acetyl-alpha-D-muramoyl-L-alanyl-gamma-D-glutamyl-L-lysyl-D-alanyl-D-alanine + di-trans,octa-cis-undecaprenyl phosphate = Mur2Ac(oyl-L-Ala-gamma-D-Glu-L-Lys-D-Ala-D-Ala)-di-trans,octa-cis-undecaprenyl diphosphate + UMP. Its pathway is cell wall biogenesis; peptidoglycan biosynthesis. Catalyzes the initial step of the lipid cycle reactions in the biosynthesis of the cell wall peptidoglycan: transfers peptidoglycan precursor phospho-MurNAc-pentapeptide from UDP-MurNAc-pentapeptide onto the lipid carrier undecaprenyl phosphate, yielding undecaprenyl-pyrophosphoryl-MurNAc-pentapeptide, known as lipid I. This chain is Phospho-N-acetylmuramoyl-pentapeptide-transferase, found in Streptococcus suis (strain 98HAH33).